The following is a 263-amino-acid chain: Polyglutamine-binding protein 1 (263 aa).

The WW domain occupies 46–80; that stretch reads EGLPPSWYKVFDPSCGLPYYWNVETDLVSWLSPHD. The disordered stretch occupies residues 94 to 263; the sequence is NNNADAEDKS…AEASRTKQQD (170 aa). The span at 99–173 shows a compositional bias: basic and acidic residues; sequence AEDKSDRNLE…DKADREEGKD (75 aa). The 1-1; approximate repeat unit spans residues 104 to 110; it reads DRNLEKV. The segment at 104–138 is 5 X 7 AA approximate tandem repeats of D-R-[NS]-H-E-K-S; it reads DRNLEKVDRNHEKSDRSHEKPDRSHEKADRNHEKN. The stretch at 111–117 is one 1-2 repeat; it reads DRNHEKS. The stretch at 118 to 124 is one 1-3; approximate repeat; the sequence is DRSHEKP. Residues 125-131 form a 1-4; approximate repeat; that stretch reads DRSHEKA. Residues 132–138 form a 1-5; approximate repeat; that stretch reads DRNHEKN. Tandem repeats lie at residues 139 to 140, 141 to 142, 143 to 144, 150 to 151, 152 to 153, 154 to 155, 156 to 157, 158 to 159, and 160 to 161. Residues 139-144 are 3 X 2 AA tandem repeats of [DE]-R; that stretch reads DRERER. The interval 150–161 is 6 X 2 AA tandem repeats of [DE]-R; that stretch reads DRERDRDRERER. Positions 243 to 253 are important for interaction with TXNL4A; sequence YPSPGAVLRAN. Ser-245 is subject to Phosphoserine.

Interacts with POU3F2/Brn-2, ATXN1, TXNL4A, HTT and AR. Interaction with ATXN1 correlates positively with the length of the polyglutamine tract. Interacts with RNA polymerase II large subunit in a phosphorylation-dependent manner. Forms a ternary complex with ATXN1 mutant and phosphorylated RNA polymerase II. Interacts (via C-terminus) with TXNL4A and CD2BP2. Interacts (via WW domain) with ATN1 and SF3B1, and may interact with additional splice factors. Interacts (via WW domain) with WBP11; Leading to reduce interaction between PQBP1 and TXNL4A. Interacts with CAPRIN1. Interacts with DDX1. Interacts with SFPQ. Interacts with KHSRP. Detected in brain cortex and hippocampus neurons (at protein level). Expressed in brain with high level in cerebellar cortex, hippocampus and olfactory bulb.

The protein localises to the nucleus. It is found in the nucleus speckle. It localises to the cytoplasmic granule. Functionally, intrinsically disordered protein that acts as a scaffold, and which is involved in different processes, such as pre-mRNA splicing, transcription regulation, innate immunity and neuron development. Interacts with splicing-related factors via the intrinsically disordered region and regulates alternative splicing of target pre-mRNA species. May suppress the ability of POU3F2 to transactivate the DRD1 gene in a POU3F2 dependent manner. Can activate transcription directly or via association with the transcription machinery. May be involved in ATXN1 mutant-induced cell death. The interaction with ATXN1 mutant reduces levels of phosphorylated RNA polymerase II large subunit. Involved in the assembly of cytoplasmic stress granule, possibly by participating in the transport of neuronal RNA granules. Also acts as an innate immune sensor of infection by retroviruses, by detecting the presence of reverse-transcribed DNA in the cytosol. Directly binds retroviral reverse-transcribed DNA in the cytosol and interacts with CGAS, leading to activate the cGAS-STING signaling pathway, triggering type-I interferon production. The sequence is that of Polyglutamine-binding protein 1 (Pqbp1) from Mus musculus (Mouse).